A 505-amino-acid chain; its full sequence is AMP phosphorylase 2 (505 aa).

AMP contacts are provided by residues G169, 195–200 (SRAITT), T204, S265, and K289.

It belongs to the thymidine/pyrimidine-nucleoside phosphorylase family. Type 2 subfamily.

The enzyme catalyses AMP + phosphate = alpha-D-ribose 1,5-bisphosphate + adenine. It carries out the reaction CMP + phosphate = cytosine + alpha-D-ribose 1,5-bisphosphate. The catalysed reaction is UMP + phosphate = alpha-D-ribose 1,5-bisphosphate + uracil. Its function is as follows. Catalyzes the conversion of AMP and phosphate to adenine and ribose 1,5-bisphosphate (R15P). Exhibits phosphorylase activity toward CMP and UMP in addition to AMP. Functions in an archaeal AMP degradation pathway, together with R15P isomerase and RubisCO. The sequence is that of AMP phosphorylase 2 from Archaeoglobus fulgidus (strain ATCC 49558 / DSM 4304 / JCM 9628 / NBRC 100126 / VC-16).